The primary structure comprises 290 residues: Porphobilinogen deaminase (290 aa).

Residue Cys-237 is modified to S-(dipyrrolylmethanemethyl)cysteine.

The protein belongs to the HMBS family. Monomer. The cofactor is dipyrromethane.

It catalyses the reaction 4 porphobilinogen + H2O = hydroxymethylbilane + 4 NH4(+). It participates in porphyrin-containing compound metabolism; protoporphyrin-IX biosynthesis; coproporphyrinogen-III from 5-aminolevulinate: step 2/4. In terms of biological role, tetrapolymerization of the monopyrrole PBG into the hydroxymethylbilane pre-uroporphyrinogen in several discrete steps. The sequence is that of Porphobilinogen deaminase from Clostridium botulinum (strain Loch Maree / Type A3).